The sequence spans 613 residues: Dihydroxy-acid dehydratase (613 aa).

A Mg(2+)-binding site is contributed by Asp-81. Cys-122 provides a ligand contact to [2Fe-2S] cluster. Mg(2+) contacts are provided by Asp-123 and Lys-124. Lys-124 is modified (N6-carboxylysine). Cys-197 lines the [2Fe-2S] cluster pocket. Glu-493 serves as a coordination point for Mg(2+). Ser-519 serves as the catalytic Proton acceptor.

Belongs to the IlvD/Edd family. Homodimer. [2Fe-2S] cluster serves as cofactor. Mg(2+) is required as a cofactor.

It catalyses the reaction (2R)-2,3-dihydroxy-3-methylbutanoate = 3-methyl-2-oxobutanoate + H2O. The enzyme catalyses (2R,3R)-2,3-dihydroxy-3-methylpentanoate = (S)-3-methyl-2-oxopentanoate + H2O. Its pathway is amino-acid biosynthesis; L-isoleucine biosynthesis; L-isoleucine from 2-oxobutanoate: step 3/4. The protein operates within amino-acid biosynthesis; L-valine biosynthesis; L-valine from pyruvate: step 3/4. Functionally, functions in the biosynthesis of branched-chain amino acids. Catalyzes the dehydration of (2R,3R)-2,3-dihydroxy-3-methylpentanoate (2,3-dihydroxy-3-methylvalerate) into 2-oxo-3-methylpentanoate (2-oxo-3-methylvalerate) and of (2R)-2,3-dihydroxy-3-methylbutanoate (2,3-dihydroxyisovalerate) into 2-oxo-3-methylbutanoate (2-oxoisovalerate), the penultimate precursor to L-isoleucine and L-valine, respectively. This chain is Dihydroxy-acid dehydratase, found in Corynebacterium glutamicum (strain R).